A 298-amino-acid chain; its full sequence is Small ribosomal subunit protein uS3 (298 aa).

The KH type-2 domain occupies 38-106; sequence IRRRLSRGME…QVQLNILEVK (69 aa). Residues 212-298 form a disordered region; the sequence is KQKQQESEVR…EPRADEKTEG (87 aa). Positions 214 to 237 are enriched in basic and acidic residues; the sequence is KQQESEVRPPRGERGERGGRPERG. Over residues 265–278 the composition is skewed to polar residues; that stretch reads GSAQSPEQAQTSGD.

Belongs to the universal ribosomal protein uS3 family. In terms of assembly, part of the 30S ribosomal subunit. Forms a tight complex with proteins S10 and S14.

In terms of biological role, binds the lower part of the 30S subunit head. Binds mRNA in the 70S ribosome, positioning it for translation. This Saccharopolyspora erythraea (strain ATCC 11635 / DSM 40517 / JCM 4748 / NBRC 13426 / NCIMB 8594 / NRRL 2338) protein is Small ribosomal subunit protein uS3.